The following is a 1524-amino-acid chain: DNA polymerase alpha catalytic subunit (1524 aa).

Disordered regions lie at residues 1 to 53 and 68 to 139; these read MSGD…QKPI and RRRE…KVNP. Residues 20–30 show a composition bias toward basic and acidic residues; the sequence is SSRKDTLERLK. Acidic residues predominate over residues 79–96; sequence EDGEGGDLGYLDEGEEED. Residues cysteine 1333, cysteine 1336, cysteine 1375, cysteine 1378, cysteine 1414, cysteine 1419, cysteine 1440, and cysteine 1446 each contribute to the Zn(2+) site. The CysA-type zinc-finger motif lies at 1333–1378; that stretch reads CPSCSTAFNCPSIISSVCASISKKPATPETEESDSTFWLKLHCPKC. The CysB motif signature appears at 1414–1446; sequence CEDESCKHTTRSPNFRLLGERERGTVCPNYPNC.

Belongs to the DNA polymerase type-B family.

The protein resides in the nucleus. The catalysed reaction is DNA(n) + a 2'-deoxyribonucleoside 5'-triphosphate = DNA(n+1) + diphosphate. Its function is as follows. Polymerase alpha in a complex with DNA primase is a replicative polymerase. The sequence is that of DNA polymerase alpha catalytic subunit (POLA) from Arabidopsis thaliana (Mouse-ear cress).